A 510-amino-acid polypeptide reads, in one-letter code: Replication factor C large subunit (510 aa).

48-55 lines the ATP pocket; it reads GPPGTGKT. Residues 459-510 are disordered; the sequence is MESMLERKREESEVEEEAKEIEEAVEKAEEEEEREEKKKEGGGEQRTLDAFF. Residues 493-510 show a composition bias toward basic and acidic residues; the sequence is EEKKKEGGGEQRTLDAFF.

This sequence belongs to the activator 1 small subunits family. RfcL subfamily. Heteromultimer composed of small subunits (RfcS) and large subunits (RfcL).

Part of the RFC clamp loader complex which loads the PCNA sliding clamp onto DNA. This Methanopyrus kandleri (strain AV19 / DSM 6324 / JCM 9639 / NBRC 100938) protein is Replication factor C large subunit.